The chain runs to 588 residues: Adenine deaminase (588 aa).

It belongs to the metallo-dependent hydrolases superfamily. Adenine deaminase family. In terms of assembly, homodimer. Mn(2+) serves as cofactor.

The enzyme catalyses adenine + H2O + H(+) = hypoxanthine + NH4(+). The protein is Adenine deaminase of Shigella sonnei (strain Ss046).